The sequence spans 411 residues: Squalene synthase (411 aa).

The next 2 helical transmembrane spans lie at 281 to 301 (SIFRFCAIPQVMAIGTLAMCY) and 388 to 408 (SPVLIVVIFIILAIILAQLSG).

The protein belongs to the phytoene/squalene synthase family. Requires Mg(2+) as cofactor.

Its subcellular location is the endoplasmic reticulum membrane. It catalyses the reaction 2 (2E,6E)-farnesyl diphosphate + NADPH + H(+) = squalene + 2 diphosphate + NADP(+). It carries out the reaction 2 (2E,6E)-farnesyl diphosphate + NADH + H(+) = squalene + 2 diphosphate + NAD(+). It participates in terpene metabolism; lanosterol biosynthesis; lanosterol from farnesyl diphosphate: step 1/3. The sequence is that of Squalene synthase from Nicotiana benthamiana.